Here is an 807-residue protein sequence, read N- to C-terminus: Glycerol-3-phosphate acyltransferase (807 aa).

The HXXXXD motif motif lies at 305–310 (CHRSHM).

The protein belongs to the GPAT/DAPAT family.

It is found in the cell inner membrane. It carries out the reaction sn-glycerol 3-phosphate + an acyl-CoA = a 1-acyl-sn-glycero-3-phosphate + CoA. The protein operates within phospholipid metabolism; CDP-diacylglycerol biosynthesis; CDP-diacylglycerol from sn-glycerol 3-phosphate: step 1/3. This Aliivibrio fischeri (strain ATCC 700601 / ES114) (Vibrio fischeri) protein is Glycerol-3-phosphate acyltransferase.